Reading from the N-terminus, the 196-residue chain is APGW-amide-related neuropeptide (196 aa).

The first 22 residues, 1-22, serve as a signal peptide directing secretion; sequence METLNIFLVIFSLLGTIIIASS. A propeptide spanning residues 23 to 48 is cleaved from the precursor; sequence SDESSERKKRDLDTIDDTNNDFLTAD. Tryptophan 54 is subject to Tryptophan amide. The propeptide occupies 58–68; that stretch reads SFDDDILNNLD. Tryptophan amide is present on tryptophan 74. Residues 78–88 constitute a propeptide that is removed on maturation; that stretch reads SDMLFDSEEIE. Tryptophan 94 carries the tryptophan amide modification. Residues 98–105 constitute a propeptide that is removed on maturation; it reads SSSLYDDE. The residue at position 111 (tryptophan 111) is a Tryptophan amide. Positions 115–129 are excised as a propeptide; it reads SSALLDDLSLYNSIV. Tryptophan 135 bears the Tryptophan amide mark. The propeptide occupies 139 to 146; sequence SDTFKVDI. Tryptophan amide is present on residues tryptophan 151 and tryptophan 158. Positions 162–196 are excised as a propeptide; it reads SGPNMCMDFQDEILQLYKLLNEAEKLHSECEALNI.

In terms of tissue distribution, expressed in cerebral, pedal and visceral ganglia. TPGW-amide is found in pedal and cerebral ganglia and in shell adductor muscle (at protein level). RPGW-amide and KPGW-amide are found in pedal retractor muscle, ABRM and shell adductor muscle (at protein level).

RPGW-amide, KPGW-amide and TPGW-amide tetrapeptides are involved in control of muscle contraction and may function as neurotransmitters. These peptides increase tension of the pedal retractor muscle and, in conjunction with FMRF-amide, increase peak tension of the anterior byssus retractor muscle (ABRM). This chain is APGW-amide-related neuropeptide, found in Mytilus edulis (Blue mussel).